The following is a 261-amino-acid chain: MQTTPGKRQRRQRGSINPEDIISGAFELAQQVSIDNLSMPLLGKHLGVGVTSIYWYFRKKDDLLNAMTDRALSKYVFATPYIEAGDWRETLRNHARSMRKTFADNPVLCDLILIRAALSPKTARLGAQEMEKAIANLVTAGLSLEDAFDIYSAVSVHVRGSVVLDRLSRKSQSAGSGPSAIEHPVAIDPATTPLLAHATGRGHRIGAPDETNFEYGLECILDHAGRLIEQSSKAAGEVAVRRPTATADAPTPGARAKAVAR.

In terms of domain architecture, HTH tetR-type spans 15 to 75 (SINPEDIISG…AMTDRALSKY (61 aa)). Residues 38–57 (SMPLLGKHLGVGVTSIYWYF) constitute a DNA-binding region (H-T-H motif). Residues 234–261 (AAGEVAVRRPTATADAPTPGARAKAVAR) form a disordered region. The span at 241 to 261 (RRPTATADAPTPGARAKAVAR) shows a compositional bias: low complexity.

This is an uncharacterized protein from Mycobacterium bovis (strain ATCC BAA-935 / AF2122/97).